Reading from the N-terminus, the 1312-residue chain is DNA repair protein RAD50.L (1312 aa).

ATP-binding residues include R13, N38, G39, G41, K42, T43, T44, V67, D69, and Q159. T43 contributes to the Mg(2+) binding site. Q159 contacts Mg(2+). Coiled coils occupy residues 203–342 (VREY…LNRE), 415–558 (LREF…IKSR), and 587–628 (INQT…FEEK). In terms of domain architecture, Zinc-hook spans 635-734 (SQDFDSDLSR…RKDDMMELKP (100 aa)). Positions 681 and 684 each coordinate Zn(2+). Residues 712–1070 (LKSAEGELKR…ENKSESLKTN (359 aa)) adopt a coiled-coil conformation.

It belongs to the SMC family. RAD50 subfamily. As to quaternary structure, component of the MRN complex composed of two heterodimers RAD50 and MRE11 associated with a single NBN. Zn(2+) serves as cofactor.

It localises to the nucleus. The protein resides in the chromosome. Its subcellular location is the telomere. The catalysed reaction is ATP + H2O = ADP + phosphate + H(+). Functionally, component of the MRN complex, which plays a central role in double-strand break (DSB) repair, DNA recombination, maintenance of telomere integrity and meiosis. The MRN complex is involved in the repair of DNA double-strand breaks (DSBs) via homologous recombination (HR), an error-free mechanism which primarily occurs during S and G2 phases. The complex (1) mediates the end resection of damaged DNA, which generates proper single-stranded DNA, a key initial steps in HR, and is (2) required for the recruitment of other repair factors and efficient activation of ATM and ATR upon DNA damage. The MRN complex possesses single-strand endonuclease activity and double-strand-specific 3'-5' exonuclease activity, which are provided by mre11, to initiate end resection, which is required for single-strand invasion and recombination. Within the complex, rad50 is both required to bind DNA ends and hold them in close proximity and regulate the activity of MRE11. Rad50 provides an ATP-dependent control of MRE11 by positioning DNA ends into the mre11 active site: ATP-binding induces a large structural change from an open form with accessible MRE11 nuclease sites into a closed form. The MRN complex is also required for DNA damage signaling via activation of the atm and atr kinases: the nuclease activity of mre11 is not required to activate ATM and ATR. The MRN complex promotes recruitment of topbp1 to DNA damage sites. The MRN complex and rbbp8/CtIP are also required for chromosome alignment during metaphase. The chain is DNA repair protein RAD50.L from Xenopus laevis (African clawed frog).